Here is a 481-residue protein sequence, read N- to C-terminus: Probable squalene synthase (481 aa).

2 helical membrane passes run 294–314 (SVFN…ELVF) and 416–436 (FLVL…IGAA).

This sequence belongs to the phytoene/squalene synthase family. Requires Mg(2+) as cofactor.

It is found in the endoplasmic reticulum membrane. The enzyme catalyses 2 (2E,6E)-farnesyl diphosphate + NADPH + H(+) = squalene + 2 diphosphate + NADP(+). It carries out the reaction 2 (2E,6E)-farnesyl diphosphate + NADH + H(+) = squalene + 2 diphosphate + NAD(+). It participates in terpene metabolism; lanosterol biosynthesis; lanosterol from farnesyl diphosphate: step 1/3. Its function is as follows. Catalyzes the condensation of 2 two farnesyl pyrophosphate moieties to form squalene. It is the first committed enzyme of the sterol biosynthesis pathway. Required for the biosynthesis of ergosterol. This chain is Probable squalene synthase (erg-6), found in Neurospora crassa (strain ATCC 24698 / 74-OR23-1A / CBS 708.71 / DSM 1257 / FGSC 987).